A 289-amino-acid polypeptide reads, in one-letter code: Deoxyuridine 5'-triphosphate nucleotidohydrolase (289 aa).

Substrate-binding positions include 176 to 178 and 283 to 284; these read RSG and FG.

Belongs to the dUTPase family. Mg(2+) serves as cofactor.

The enzyme catalyses dUTP + H2O = dUMP + diphosphate + H(+). Its function is as follows. Involved in nucleotide metabolism: produces dUMP, the immediate precursor of thymidine nucleotides and decreases the intracellular concentration of dUTP to avoid uracil incorporation into viral DNA. The polypeptide is Deoxyuridine 5'-triphosphate nucleotidohydrolase (Equus caballus (Horse)).